The sequence spans 535 residues: KNR4/SMI1 homolog (535 aa).

Over residues 354-363 the composition is skewed to basic and acidic residues; that stretch reads ERKLPEEPKR. The segment at 354 to 535 is disordered; sequence ERKLPEEPKR…LKDDFENVAL (182 aa). 3 stretches are compositionally biased toward polar residues: residues 364 to 384, 397 to 407, and 456 to 469; these read TVSSSQGSQNTVEPAEQQETA, TSLSVDNTGTK, and ESTNAVENTETSQE. Residues 474-483 show a composition bias toward basic and acidic residues; sequence TSEKPEEKPK. Basic residues predominate over residues 484–494; the sequence is KQSKKASKKKG. 2 stretches are compositionally biased toward basic and acidic residues: residues 495–509 and 524–535; these read KKDEKKDTDSKTKEP and EKLKDDFENVAL.

This sequence belongs to the KNR4/SMI1 family.

The protein is KNR4/SMI1 homolog of Kluyveromyces lactis (strain ATCC 8585 / CBS 2359 / DSM 70799 / NBRC 1267 / NRRL Y-1140 / WM37) (Yeast).